The sequence spans 159 residues: Bacterial non-heme ferritin (159 aa).

The Ferritin-like diiron domain maps to 1-145 (MISEKLQNAI…GIVDKIKRAG (145 aa)). 5 residues coordinate Fe cation: glutamate 17, glutamate 50, histidine 53, glutamate 94, and glutamine 127.

This sequence belongs to the ferritin family. Prokaryotic subfamily. As to quaternary structure, homooligomer of 24 subunits that assemble into a spherical protein shell (12 +/- 1 nM diameter) that can sequester at least 2000 iron atoms.

It catalyses the reaction 4 Fe(2+) + O2 + 6 H2O = 4 iron(III) oxide-hydroxide + 12 H(+). May alleviate iron toxicity in the presence of oxygen. This is Bacterial non-heme ferritin (ftnA) from Bacteroides fragilis (strain 638R).